The primary structure comprises 705 residues: Polyribonucleotide nucleotidyltransferase (705 aa).

Residues D486 and D492 each contribute to the Mg(2+) site. The region spanning 553 to 612 (PRIYKIKINPEKIKDVIGKGGSVIRMLTEKTKSSIEIEDDGTVKVISTDIKNAQCALKKI) is the KH domain. The region spanning 622–690 (NKIYVAKITR…RYGRIRLSFT (69 aa)) is the S1 motif domain.

This sequence belongs to the polyribonucleotide nucleotidyltransferase family. In terms of assembly, component of the RNA degradosome, which is a multiprotein complex involved in RNA processing and mRNA degradation. The cofactor is Mg(2+).

It localises to the cytoplasm. It catalyses the reaction RNA(n+1) + phosphate = RNA(n) + a ribonucleoside 5'-diphosphate. Involved in mRNA degradation. Catalyzes the phosphorolysis of single-stranded polyribonucleotides processively in the 3'- to 5'-direction. This is Polyribonucleotide nucleotidyltransferase from Wigglesworthia glossinidia brevipalpis.